A 171-amino-acid polypeptide reads, in one-letter code: UPF0303 protein YPK_1581 (171 aa).

This sequence belongs to the UPF0303 family.

This Yersinia pseudotuberculosis serotype O:3 (strain YPIII) protein is UPF0303 protein YPK_1581.